Reading from the N-terminus, the 937-residue chain is Isoleucine--tRNA ligase (937 aa).

Residues 58-68 (PYANGSIHIGH) carry the 'HIGH' region motif. Position 561 (glutamate 561) interacts with L-isoleucyl-5'-AMP. The short motif at 602 to 606 (KMSKS) is the 'KMSKS' region element. Lysine 605 contacts ATP. Zn(2+) is bound by residues cysteine 900, cysteine 903, cysteine 920, and cysteine 923.

The protein belongs to the class-I aminoacyl-tRNA synthetase family. IleS type 1 subfamily. As to quaternary structure, monomer. Requires Zn(2+) as cofactor.

It is found in the cytoplasm. The catalysed reaction is tRNA(Ile) + L-isoleucine + ATP = L-isoleucyl-tRNA(Ile) + AMP + diphosphate. Functionally, catalyzes the attachment of isoleucine to tRNA(Ile). As IleRS can inadvertently accommodate and process structurally similar amino acids such as valine, to avoid such errors it has two additional distinct tRNA(Ile)-dependent editing activities. One activity is designated as 'pretransfer' editing and involves the hydrolysis of activated Val-AMP. The other activity is designated 'posttransfer' editing and involves deacylation of mischarged Val-tRNA(Ile). The polypeptide is Isoleucine--tRNA ligase (Pectobacterium carotovorum subsp. carotovorum (strain PC1)).